The sequence spans 377 residues: Chaperone protein DnaJ (377 aa).

The J domain maps to 5-70 (DFYEVLGVER…SKRAAYDQYG (66 aa)). The segment at 136–214 (GTTVTIRVPT…CHGQGRVEEQ (79 aa)) adopts a CR-type zinc-finger fold. Cys149, Cys152, Cys166, Cys169, Cys188, Cys191, Cys202, and Cys205 together coordinate Zn(2+). CXXCXGXG motif repeat units follow at residues 149 to 156 (CKTCNGSG), 166 to 173 (CTTCGGIG), 188 to 195 (CPRCHGTG), and 202 to 209 (CGSCHGQG).

Belongs to the DnaJ family. Homodimer. Zn(2+) is required as a cofactor.

Its subcellular location is the cytoplasm. In terms of biological role, participates actively in the response to hyperosmotic and heat shock by preventing the aggregation of stress-denatured proteins and by disaggregating proteins, also in an autonomous, DnaK-independent fashion. Unfolded proteins bind initially to DnaJ; upon interaction with the DnaJ-bound protein, DnaK hydrolyzes its bound ATP, resulting in the formation of a stable complex. GrpE releases ADP from DnaK; ATP binding to DnaK triggers the release of the substrate protein, thus completing the reaction cycle. Several rounds of ATP-dependent interactions between DnaJ, DnaK and GrpE are required for fully efficient folding. Also involved, together with DnaK and GrpE, in the DNA replication of plasmids through activation of initiation proteins. This Pseudomonas paraeruginosa (strain DSM 24068 / PA7) (Pseudomonas aeruginosa (strain PA7)) protein is Chaperone protein DnaJ.